Consider the following 172-residue polypeptide: Adenylate kinase isoenzyme 6 (172 aa).

ATP-binding residues include G13, G15, K16, T17, and T18. The segment at 33–56 (NVGDLAREGHLYDGYDEEYGCPIL) is NMPbind. The LID stretch occupies residues 108–118 (TRGYHEKKLQD). R109 lines the ATP pocket.

The protein belongs to the adenylate kinase family. AK6 subfamily. As to quaternary structure, monomer and homodimer. Interacts with small ribosomal subunit protein uS11. Not a structural component of 43S pre-ribosomes, but transiently interacts with them by binding to uS11. Interacts with COIL (via C-terminus).

The protein resides in the cytoplasm. The protein localises to the nucleus. It is found in the nucleoplasm. Its subcellular location is the cajal body. It carries out the reaction AMP + ATP = 2 ADP. It catalyses the reaction ATP + H2O = ADP + phosphate + H(+). Functionally, broad-specificity nucleoside monophosphate (NMP) kinase that catalyzes the reversible transfer of the terminal phosphate group between nucleoside triphosphates and monophosphates. Also has ATPase activity. Involved in the late cytoplasmic maturation steps of the 40S ribosomal particles, specifically 18S rRNA maturation. While NMP activity is not required for ribosome maturation, ATPase activity is. Associates transiently with small ribosomal subunit protein uS11. ATP hydrolysis breaks the interaction with uS11. May temporarily remove uS11 from the ribosome to enable a conformational change of the ribosomal RNA that is needed for the final maturation step of the small ribosomal subunit. Its NMP activity may have a role in nuclear energy homeostasis. May be involved in regulation of Cajal body (CB) formation. The chain is Adenylate kinase isoenzyme 6 from Rattus norvegicus (Rat).